The chain runs to 130 residues: Ribosome biogenesis inhibitor MINAS-60 (130 aa).

Residues 61–130 (SRVRRIPTRP…RRRRPVTSSC (70 aa)) form a disordered region. Residues 109–130 (KGRRRRRRRMRRRRRRPVTSSC) are compositionally biased toward basic residues.

In terms of assembly, interacts with 60S ribosome assembly factors GTPBP4 and MRTO4.

The protein localises to the nucleus. It localises to the nucleolus. Its function is as follows. Acts as a late-stage inhibitor of pre-60S ribosome assembly by preventing pre-60S ribosome export from nucleus. This chain is Ribosome biogenesis inhibitor MINAS-60, found in Homo sapiens (Human).